The following is a 387-amino-acid chain: Cysteine desulfurase IscS (387 aa).

Residues 73-74 (AT), Asn155, Gln183, and 203-205 (SAH) contribute to the pyridoxal 5'-phosphate site. Lys206 is modified (N6-(pyridoxal phosphate)lysine). Thr241 contacts pyridoxal 5'-phosphate. The Cysteine persulfide intermediate role is filled by Cys328. Cys328 contributes to the [2Fe-2S] cluster binding site.

Belongs to the class-V pyridoxal-phosphate-dependent aminotransferase family. NifS/IscS subfamily. Homodimer. Forms a heterotetramer with IscU, interacts with other sulfur acceptors. The cofactor is pyridoxal 5'-phosphate.

The protein resides in the cytoplasm. It carries out the reaction (sulfur carrier)-H + L-cysteine = (sulfur carrier)-SH + L-alanine. The protein operates within cofactor biosynthesis; iron-sulfur cluster biosynthesis. Master enzyme that delivers sulfur to a number of partners involved in Fe-S cluster assembly, tRNA modification or cofactor biosynthesis. Catalyzes the removal of elemental sulfur atoms from cysteine to produce alanine. Functions as a sulfur delivery protein for Fe-S cluster synthesis onto IscU, an Fe-S scaffold assembly protein, as well as other S acceptor proteins. The polypeptide is Cysteine desulfurase IscS (Helicobacter pylori (strain P12)).